The sequence spans 199 residues: Interleukin-11 (199 aa).

The signal sequence occupies residues 1-21; it reads MNCVCRLVLVVLSLWPDTAVA. Positions 182-190 are important for interaction with IL11RA and for the stimulation of cell proliferation; the sequence is HLTLDWAVR.

This sequence belongs to the IL-6 superfamily. In terms of assembly, interacts with IL11RA to associate with IL6ST, giving rise to a multimeric signaling complex.

It is found in the secreted. In terms of biological role, cytokine that stimulates the proliferation of hematopoietic stem cells and megakaryocyte progenitor cells and induces megakaryocyte maturation resulting in increased platelet production. Also promotes the proliferation of hepatocytes in response to liver damage. Binding to its receptor formed by IL6ST and IL11RA activates a signaling cascade that promotes cell proliferation. Signaling leads to the activation of intracellular protein kinases and the phosphorylation of STAT3. The interaction with the membrane-bound IL11RA and IL6ST stimulates 'classic signaling', whereas the binding of IL11 and soluble IL11RA to IL6ST stimulates 'trans-signaling'. This is Interleukin-11 (IL11) from Macaca fascicularis (Crab-eating macaque).